The chain runs to 389 residues: Chalcone synthase 3 (389 aa).

The active site involves Cys-164.

Belongs to the thiolase-like superfamily. Chalcone/stilbene synthases family.

It carries out the reaction (E)-4-coumaroyl-CoA + 3 malonyl-CoA + 3 H(+) = 2',4,4',6'-tetrahydroxychalcone + 3 CO2 + 4 CoA. It participates in secondary metabolite biosynthesis; flavonoid biosynthesis. Its function is as follows. The primary product of this enzyme is 4,2',4',6'-tetrahydroxychalcone (also termed naringenin-chalcone or chalcone) which can under specific conditions spontaneously isomerize into naringenin. This is Chalcone synthase 3 (CHS3) from Trifolium subterraneum (Subterranean clover).